We begin with the raw amino-acid sequence, 511 residues long: Glucans biosynthesis protein G (511 aa).

Positions 1–22 are cleaved as a signal peptide; the sequence is MMKMRWLGAAIMLTLYASSSWA.

It belongs to the OpgD/OpgG family.

It is found in the periplasm. It functions in the pathway glycan metabolism; osmoregulated periplasmic glucan (OPG) biosynthesis. Its function is as follows. Involved in the biosynthesis of osmoregulated periplasmic glucans (OPGs). The protein is Glucans biosynthesis protein G of Salmonella paratyphi A (strain ATCC 9150 / SARB42).